Consider the following 499-residue polypeptide: L-asparagine permease (499 aa).

12 helical membrane-spanning segments follow: residues 34-54 (QVQMIAIGGAIGTGLFLGAGA), 58-78 (MAGPALALVYLICGLFSFFIL), 109-129 (VAGWMYFINWAMTGIVDITAV), 146-166 (VFALAALTIVGTMNMIGVKWF), 171-191 (FWFALIKVLAIVTFLVVGTVF), 219-239 (LLPALVLIQGVVFAFASIEMV), 264-284 (IGLFYVGSVVLLVMLLPWSAY), 298-318 (LGVPYIGSIMNIVVLTAALSS), 353-373 (YAGILATLVVYVVGVFLNYLV), 378-398 (FEIVLNFASLGIIASWAFIIV), 422-442 (APFTSWLTLLFLLSVLVLMAF), and 448-468 (TYTIAALPIIGILLVIGWFGV).

This sequence belongs to the amino acid-polyamine-organocation (APC) superfamily. Amino acid transporter (AAT) (TC 2.A.3.1) family.

The protein resides in the cell inner membrane. The sequence is that of L-asparagine permease (ansP) from Escherichia coli (strain K12).